We begin with the raw amino-acid sequence, 270 residues long: 3-methyl-2-oxobutanoate hydroxymethyltransferase (270 aa).

Mg(2+) contacts are provided by aspartate 43 and aspartate 82. Residues 43-44, aspartate 82, and lysine 112 each bind 3-methyl-2-oxobutanoate; that span reads DS. Position 114 (glutamate 114) interacts with Mg(2+). Glutamate 179 serves as the catalytic Proton acceptor.

This sequence belongs to the PanB family. In terms of assembly, homodecamer; pentamer of dimers. Mg(2+) is required as a cofactor.

Its subcellular location is the cytoplasm. It catalyses the reaction 3-methyl-2-oxobutanoate + (6R)-5,10-methylene-5,6,7,8-tetrahydrofolate + H2O = 2-dehydropantoate + (6S)-5,6,7,8-tetrahydrofolate. It functions in the pathway cofactor biosynthesis; (R)-pantothenate biosynthesis; (R)-pantoate from 3-methyl-2-oxobutanoate: step 1/2. Functionally, catalyzes the reversible reaction in which hydroxymethyl group from 5,10-methylenetetrahydrofolate is transferred onto alpha-ketoisovalerate to form ketopantoate. The chain is 3-methyl-2-oxobutanoate hydroxymethyltransferase from Staphylococcus carnosus (strain TM300).